The chain runs to 277 residues: Phycobilisome rod-core linker polypeptide CpcG1 (277 aa).

Positions 11-189 (RTLDQRVVSY…YWRNKEISLS (179 aa)) constitute a PBS-linker domain.

Belongs to the phycobilisome linker protein family. In terms of assembly, the phycobilisome is a hemidiscoidal structure that is composed of two distinct substructures: a core complex and a number of rods radiating from the core.

The protein localises to the cellular thylakoid membrane. Rod-core linker protein required for attachment of phycocyanin to allophycocyanin in cores of phycobilisomes. Functionally, linker polypeptides determine the state of aggregation and the location of the disk-shaped phycobiliprotein units within the phycobilisome and modulate their spectroscopic properties in order to mediate a directed and optimal energy transfer. In Thermosynechococcus vestitus (strain NIES-2133 / IAM M-273 / BP-1), this protein is Phycobilisome rod-core linker polypeptide CpcG1 (cpcG1).